The chain runs to 529 residues: Arginine--tRNA ligase (529 aa).

A 'HIGH' region motif is present at residues 113 to 123 (ANPTGPLHIGH).

It belongs to the class-I aminoacyl-tRNA synthetase family. Monomer.

The protein localises to the cytoplasm. It carries out the reaction tRNA(Arg) + L-arginine + ATP = L-arginyl-tRNA(Arg) + AMP + diphosphate. This chain is Arginine--tRNA ligase, found in Aliarcobacter butzleri (strain RM4018) (Arcobacter butzleri).